Reading from the N-terminus, the 349-residue chain is UDP-N-acetylenolpyruvoylglucosamine reductase (349 aa).

Positions 25-197 constitute an FAD-binding PCMH-type domain; that stretch reads GIAARARFAA…VAVTFRLPKQ (173 aa). The active site involves Arg-173. Catalysis depends on Ser-249, which acts as the Proton donor. Glu-345 is a catalytic residue.

The protein belongs to the MurB family. FAD is required as a cofactor.

The protein localises to the cytoplasm. The catalysed reaction is UDP-N-acetyl-alpha-D-muramate + NADP(+) = UDP-N-acetyl-3-O-(1-carboxyvinyl)-alpha-D-glucosamine + NADPH + H(+). It functions in the pathway cell wall biogenesis; peptidoglycan biosynthesis. Cell wall formation. The chain is UDP-N-acetylenolpyruvoylglucosamine reductase from Burkholderia cenocepacia (strain HI2424).